Here is a 375-residue protein sequence, read N- to C-terminus: Proclotting enzyme (375 aa).

The N-terminal stretch at 1–21 (MLVNNVFSLLCFPLLMSVVRC) is a signal peptide. Residues 22–27 (STLSRQ) constitute a propeptide that is removed on maturation. Gln30 bears the Pyrrolidone carboxylic acid mark. The 46-residue stretch at 39-84 (LCSNRFTEEGTCKNVLDCRILLQKNDYNLLKESICGFEGITPKVCC) folds into the Clip domain. Disulfide bonds link Cys40–Cys83, Cys50–Cys73, and Cys56–Cys84. The disordered stretch occupies residues 90–113 (VISSTQAPPETTTTERPPKQIPPN). 4 disulfide bridges follow: Cys118/Cys248, Cys157/Cys173, Cys295/Cys311, and Cys322/Cys351. Asn122 carries N-linked (GlcNAc...) asparagine glycosylation. In terms of domain architecture, Peptidase S1 spans 128 to 375 (IIGGREAPIG…FLDWIAEHMV (248 aa)). His172 (charge relay system) is an active-site residue. The Ca(2+) site is built by Glu194, Asn196, Ser199, and Asp202. Catalysis depends on Asp228, which acts as the Charge relay system. 2 N-linked (GlcNAc...) asparagine glycosylation sites follow: Asn235 and Asn304. Catalysis depends on Ser326, which acts as the Charge relay system.

This sequence belongs to the peptidase S1 family. CLIP subfamily. In terms of assembly, in the active form, heterodimer of a light chain and a heavy chain; disulfide-linked. Forms a covalent heterodimer with intracellular coagulation inhibitor 2/LICI-2. In terms of processing, proteolytically cleaved into its mature active form by serine protease factor B. Cleavage produces a 25 kDa light chain containing the CLIP domain and a catalytic 31 kDa heavy chain which remain covalently associated through an interchain disulfide bond. Proteolytically cleaved by clotting factor G subunit beta. Post-translationally, contains six O-linked carbohydrate chains in the N-terminal light chain. In terms of tissue distribution, expressed in hemocytes (at protein level).

It is found in the cytoplasmic vesicle. It localises to the secretory vesicle. Its subcellular location is the secreted. The catalysed reaction is Selective cleavage of 18-Arg-|- and 47-Arg-|- bonds in coagulogen to form coagulin and fragments.. With respect to regulation, inhibited by intracellular coagulation inhibitor 2/LICI-2 and to a lesser extent by intracellular coagulation inhibitor 3/LICI-3. Functionally, this enzyme is closely associated with an endotoxin-sensitive hemolymph coagulation system in limulus. Its active form catalyzes the conversion of coagulogen to insoluble coagulin gel. The chain is Proclotting enzyme from Tachypleus tridentatus (Japanese horseshoe crab).